A 221-amino-acid chain; its full sequence is Translation initiation factor 6 (221 aa).

The protein belongs to the eIF-6 family.

In terms of biological role, binds to the 50S ribosomal subunit and prevents its association with the 30S ribosomal subunit to form the 70S initiation complex. This Methanopyrus kandleri (strain AV19 / DSM 6324 / JCM 9639 / NBRC 100938) protein is Translation initiation factor 6.